The following is a 364-amino-acid chain: Heat-inducible transcription repressor HrcA (364 aa).

The protein belongs to the HrcA family.

In terms of biological role, negative regulator of class I heat shock genes (grpE-dnaK-dnaJ and groELS operons). Prevents heat-shock induction of these operons. This Cyanothece sp. (strain PCC 7425 / ATCC 29141) protein is Heat-inducible transcription repressor HrcA.